The primary structure comprises 313 residues: Transaldolase (313 aa).

The active-site Schiff-base intermediate with substrate is Lys125.

It belongs to the transaldolase family. Type 1 subfamily. As to quaternary structure, homodimer.

The protein resides in the cytoplasm. The catalysed reaction is D-sedoheptulose 7-phosphate + D-glyceraldehyde 3-phosphate = D-erythrose 4-phosphate + beta-D-fructose 6-phosphate. It functions in the pathway carbohydrate degradation; pentose phosphate pathway; D-glyceraldehyde 3-phosphate and beta-D-fructose 6-phosphate from D-ribose 5-phosphate and D-xylulose 5-phosphate (non-oxidative stage): step 2/3. Functionally, transaldolase is important for the balance of metabolites in the pentose-phosphate pathway. The sequence is that of Transaldolase from Pseudomonas syringae pv. syringae (strain B728a).